Here is a 30-residue protein sequence, read N- to C-terminus: IGAGVGRDGTIAATKGKAKTLAELIXMYDS.

As to quaternary structure, monomer. In terms of processing, binds 4 heme groups per subunit.

The protein resides in the periplasm. Participates in sulfate respiration coupled with phosphorylation by transferring electrons from the enzyme dehydrogenase to ferredoxin. The polypeptide is Cytochrome c3, 50 kDa (Desulfuromonas acetoxidans (Chloropseudomonas ethylica)).